The sequence spans 255 residues: Imidazole glycerol phosphate synthase subunit HisF (255 aa).

Catalysis depends on residues aspartate 11 and aspartate 130.

The protein belongs to the HisA/HisF family. As to quaternary structure, heterodimer of HisH and HisF.

The protein localises to the cytoplasm. It carries out the reaction 5-[(5-phospho-1-deoxy-D-ribulos-1-ylimino)methylamino]-1-(5-phospho-beta-D-ribosyl)imidazole-4-carboxamide + L-glutamine = D-erythro-1-(imidazol-4-yl)glycerol 3-phosphate + 5-amino-1-(5-phospho-beta-D-ribosyl)imidazole-4-carboxamide + L-glutamate + H(+). The protein operates within amino-acid biosynthesis; L-histidine biosynthesis; L-histidine from 5-phospho-alpha-D-ribose 1-diphosphate: step 5/9. IGPS catalyzes the conversion of PRFAR and glutamine to IGP, AICAR and glutamate. The HisF subunit catalyzes the cyclization activity that produces IGP and AICAR from PRFAR using the ammonia provided by the HisH subunit. The sequence is that of Imidazole glycerol phosphate synthase subunit HisF from Campylobacter lari (strain RM2100 / D67 / ATCC BAA-1060).